We begin with the raw amino-acid sequence, 196 residues long: Small ribosomal subunit protein uS4c (196 aa).

The tract at residues 17-38 (ALPGLTRKTPKSRSNLKKKFHS) is disordered. Basic residues predominate over residues 24–38 (KTPKSRSNLKKKFHS). The S4 RNA-binding domain maps to 89 to 169 (MRLDNILFRL…LPKHLTIDTL (81 aa)).

Belongs to the universal ribosomal protein uS4 family. As to quaternary structure, part of the 30S ribosomal subunit. Contacts protein S5. The interaction surface between S4 and S5 is involved in control of translational fidelity.

It localises to the plastid. It is found in the chloroplast. In terms of biological role, one of the primary rRNA binding proteins, it binds directly to 16S rRNA where it nucleates assembly of the body of the 30S subunit. Functionally, with S5 and S12 plays an important role in translational accuracy. The chain is Small ribosomal subunit protein uS4c (rps4) from Lygeum spartum.